We begin with the raw amino-acid sequence, 208 residues long: MSLTREQLAQQIVDAGRFLYGRGWSPATSSNYSTRLSPSEALLTVSGKHKGQLGLDDVLATDLSGNSLEPGKKPSAETLLHTQLYSWRPEIGAVLHTHSVNATVLSRLTPQDFIEFEDYELQKAFSGVSTHESRVRVPIFDNDQDIARLAAKVQPWLEAHPDCVGYLIRGHGLYTWGAQMSDALRQIEAFEFLFECELKTRSVMNRQG.

Zn(2+) is bound by residues histidine 96 and histidine 98.

Belongs to the aldolase class II family. MtnB subfamily. Requires Zn(2+) as cofactor.

The catalysed reaction is 5-(methylsulfanyl)-D-ribulose 1-phosphate = 5-methylsulfanyl-2,3-dioxopentyl phosphate + H2O. Its pathway is amino-acid biosynthesis; L-methionine biosynthesis via salvage pathway; L-methionine from S-methyl-5-thio-alpha-D-ribose 1-phosphate: step 2/6. Catalyzes the dehydration of methylthioribulose-1-phosphate (MTRu-1-P) into 2,3-diketo-5-methylthiopentyl-1-phosphate (DK-MTP-1-P). The protein is Methylthioribulose-1-phosphate dehydratase of Pseudomonas fluorescens (strain Pf0-1).